Reading from the N-terminus, the 473-residue chain is ATP synthase subunit beta (473 aa).

158–165 contacts ATP; sequence GGAGVGKT.

Belongs to the ATPase alpha/beta chains family. As to quaternary structure, F-type ATPases have 2 components, CF(1) - the catalytic core - and CF(0) - the membrane proton channel. CF(1) has five subunits: alpha(3), beta(3), gamma(1), delta(1), epsilon(1). CF(0) has three main subunits: a(1), b(2) and c(9-12). The alpha and beta chains form an alternating ring which encloses part of the gamma chain. CF(1) is attached to CF(0) by a central stalk formed by the gamma and epsilon chains, while a peripheral stalk is formed by the delta and b chains.

The protein localises to the cell membrane. The enzyme catalyses ATP + H2O + 4 H(+)(in) = ADP + phosphate + 5 H(+)(out). In terms of biological role, produces ATP from ADP in the presence of a proton gradient across the membrane. The catalytic sites are hosted primarily by the beta subunits. The chain is ATP synthase subunit beta from Geobacillus kaustophilus (strain HTA426).